We begin with the raw amino-acid sequence, 175 residues long: Crossover junction endodeoxyribonuclease RuvC (175 aa).

Catalysis depends on residues Asp16, Glu76, and Asp148. The Mg(2+) site is built by Asp16, Glu76, and Asp148.

This sequence belongs to the RuvC family. In terms of assembly, homodimer which binds Holliday junction (HJ) DNA. The HJ becomes 2-fold symmetrical on binding to RuvC with unstacked arms; it has a different conformation from HJ DNA in complex with RuvA. In the full resolvosome a probable DNA-RuvA(4)-RuvB(12)-RuvC(2) complex forms which resolves the HJ. It depends on Mg(2+) as a cofactor.

Its subcellular location is the cytoplasm. The catalysed reaction is Endonucleolytic cleavage at a junction such as a reciprocal single-stranded crossover between two homologous DNA duplexes (Holliday junction).. Functionally, the RuvA-RuvB-RuvC complex processes Holliday junction (HJ) DNA during genetic recombination and DNA repair. Endonuclease that resolves HJ intermediates. Cleaves cruciform DNA by making single-stranded nicks across the HJ at symmetrical positions within the homologous arms, yielding a 5'-phosphate and a 3'-hydroxyl group; requires a central core of homology in the junction. The consensus cleavage sequence is 5'-(A/T)TT(C/G)-3'. Cleavage occurs on the 3'-side of the TT dinucleotide at the point of strand exchange. HJ branch migration catalyzed by RuvA-RuvB allows RuvC to scan DNA until it finds its consensus sequence, where it cleaves and resolves the cruciform DNA. The sequence is that of Crossover junction endodeoxyribonuclease RuvC from Bradyrhizobium sp. (strain BTAi1 / ATCC BAA-1182).